The chain runs to 412 residues: Argininosuccinate synthase (412 aa).

ATP is bound by residues 20-28 (AYSGGLDTS) and A48. Positions 100 and 105 each coordinate L-citrulline. G130 contributes to the ATP binding site. Residues T132, N136, and D137 each contribute to the L-aspartate site. N136 lines the L-citrulline pocket. L-citrulline is bound by residues R140, S189, S198, E274, and Y286.

This sequence belongs to the argininosuccinate synthase family. Type 1 subfamily. Homotetramer.

The protein resides in the cytoplasm. It catalyses the reaction L-citrulline + L-aspartate + ATP = 2-(N(omega)-L-arginino)succinate + AMP + diphosphate + H(+). The protein operates within amino-acid biosynthesis; L-arginine biosynthesis; L-arginine from L-ornithine and carbamoyl phosphate: step 2/3. The polypeptide is Argininosuccinate synthase (Shewanella halifaxensis (strain HAW-EB4)).